A 225-amino-acid chain; its full sequence is C-reactive protein (225 aa).

The N-terminal stretch at Met-1 to Ala-19 is a signal peptide. Gln-20 carries the pyrrolidone carboxylic acid modification. Residues Ser-24–Pro-225 form the Pentraxin (PTX) domain. Cys-55 and Cys-116 are disulfide-bonded. Residues Asn-80, Glu-157, Gln-158, Asp-159, and Gln-169 each contribute to the Ca(2+) site.

The protein belongs to the pentraxin family. In terms of assembly, homopentamer. Pentraxin (or pentaxin) have a discoid arrangement of 5 non-covalently bound subunits. Interacts with FCN1; may regulate monocyte activation by FCN1. Ca(2+) is required as a cofactor. As to expression, found in plasma.

The protein localises to the secreted. Displays several functions associated with host defense: it promotes agglutination, bacterial capsular swelling, phagocytosis and complement fixation through its calcium-dependent binding to phosphorylcholine. Can interact with DNA and histones and may scavenge nuclear material released from damaged circulating cells. The sequence is that of C-reactive protein (CRP) from Mesocricetus auratus (Golden hamster).